A 584-amino-acid chain; its full sequence is ATP-dependent lipid A-core flippase 2 (584 aa).

6 consecutive transmembrane segments (helical) span residues 32–52 (IFIALAGLCLFSFVDAGMIYF), 68–88 (TLQLGALLVVAIFFLRGIASF), 146–166 (SAVVIAIRESVIILVLFSMMV), 167–187 (YNSWQLTAIFLVIVPIIALII), 254–274 (AISNPVIQLIASFAIAAVLLL), and 280–300 (VLNQLTPGSFTLILIAMGSLL). One can recognise an ABC transmembrane type-1 domain in the interval 33-315 (FIALAGLCLF…LSNINQQLQK (283 aa)). Positions 347–583 (IRFNNFSFTY…AGYYQSLYQS (237 aa)) constitute an ABC transporter domain. 381–388 (GESGSGKS) lines the ATP pocket.

Belongs to the ABC transporter superfamily. Lipid exporter (TC 3.A.1.106) family. Homodimer.

It is found in the cell inner membrane. The enzyme catalyses ATP + H2O + lipid A-core oligosaccharideSide 1 = ADP + phosphate + lipid A-core oligosaccharideSide 2.. Involved in lipopolysaccharide (LPS) biosynthesis. Translocates lipid A-core from the inner to the outer leaflet of the inner membrane. Transmembrane domains (TMD) form a pore in the inner membrane and the ATP-binding domain (NBD) is responsible for energy generation. This Colwellia psychrerythraea (strain 34H / ATCC BAA-681) (Vibrio psychroerythus) protein is ATP-dependent lipid A-core flippase 2.